The following is a 336-amino-acid chain: MNVLGIESTAHTFGVGIVSDDDSEIRILSNERDTFVPKQGGMKPSDLGRHHSEVAPEVLQKALIKANLSIRDINYIAVSLGPGIGPALRVGATIARALSLKYDIKLVPVNHGIAHIEIGRFTTRSKDPLILYLSGGNTIITTYLDGKYRIFGETLDIALGNMLDTFVREVGLAPPYIVNGVHQIDLCANKGGNFIELPYIVKGQDMSYSGLLTAALRATKNNRLEDVCYSVREVAFDMLLEATERALALTGKKEILVVGGVAASVSLKTKLYNLAKDWNVEVKIVPPEYSGDNGAMIAFTGLLEARHGVTIPVEKSIIRPRWRVDQVDVTWRLSEN.

3 residues coordinate Fe cation: histidine 111, histidine 115, and tyrosine 132. Substrate is bound by residues 132–136 (YLSGG), aspartate 164, aspartate 185, and serine 264. Aspartate 292 provides a ligand contact to Fe cation.

The protein belongs to the KAE1 / TsaD family. Fe(2+) is required as a cofactor.

The protein resides in the cytoplasm. It catalyses the reaction L-threonylcarbamoyladenylate + adenosine(37) in tRNA = N(6)-L-threonylcarbamoyladenosine(37) in tRNA + AMP + H(+). Its function is as follows. Required for the formation of a threonylcarbamoyl group on adenosine at position 37 (t(6)A37) in tRNAs that read codons beginning with adenine. Is probably involved in the transfer of the threonylcarbamoyl moiety of threonylcarbamoyl-AMP (TC-AMP) to the N6 group of A37. The sequence is that of tRNA N6-adenosine threonylcarbamoyltransferase from Sulfurisphaera tokodaii (strain DSM 16993 / JCM 10545 / NBRC 100140 / 7) (Sulfolobus tokodaii).